A 150-amino-acid chain; its full sequence is Probable deoxyuridine 5'-triphosphate nucleotidohydrolase (150 aa).

It belongs to the dCTP deaminase family. Archaeal dUTPase subfamily.

The enzyme catalyses dUTP + H2O = dUMP + diphosphate + H(+). It participates in pyrimidine metabolism; dUMP biosynthesis; dUMP from dCTP (dUTP route): step 2/2. Functionally, this enzyme is involved in nucleotide metabolism: it produces dUMP, the immediate precursor of thymidine nucleotides and it decreases the intracellular concentration of dUTP so that uracil cannot be incorporated into DNA. The protein is Probable deoxyuridine 5'-triphosphate nucleotidohydrolase of Methanothermobacter thermautotrophicus (strain ATCC 29096 / DSM 1053 / JCM 10044 / NBRC 100330 / Delta H) (Methanobacterium thermoautotrophicum).